The sequence spans 878 residues: Staphylococcal nuclease domain-containing protein 1 (878 aa).

TNase-like domains are found at residues 3 to 142 (QYVS…IWGP) and 167 to 312 (KKLN…IWKN). The residue at position 316 (Ser316) is a Phosphoserine. 2 TNase-like domains span residues 326–464 (KDYS…MWSG) and 493–626 (RKLS…MWHD). One can recognise a Tudor domain in the interval 695-755 (KINVGMNVAA…SSLPDTYTKL (61 aa)).

It localises to the cytoplasm. The protein resides in the cytosol. The protein is Staphylococcal nuclease domain-containing protein 1 of Schizosaccharomyces pombe (strain 972 / ATCC 24843) (Fission yeast).